The sequence spans 265 residues: Ribosomal RNA small subunit methyltransferase A (265 aa).

Residues H13, L15, G40, E61, D85, and N103 each contribute to the S-adenosyl-L-methionine site.

Belongs to the class I-like SAM-binding methyltransferase superfamily. rRNA adenine N(6)-methyltransferase family. RsmA subfamily.

It is found in the cytoplasm. It catalyses the reaction adenosine(1518)/adenosine(1519) in 16S rRNA + 4 S-adenosyl-L-methionine = N(6)-dimethyladenosine(1518)/N(6)-dimethyladenosine(1519) in 16S rRNA + 4 S-adenosyl-L-homocysteine + 4 H(+). Its function is as follows. Specifically dimethylates two adjacent adenosines (A1518 and A1519) in the loop of a conserved hairpin near the 3'-end of 16S rRNA in the 30S particle. May play a critical role in biogenesis of 30S subunits. In Bordetella bronchiseptica (strain ATCC BAA-588 / NCTC 13252 / RB50) (Alcaligenes bronchisepticus), this protein is Ribosomal RNA small subunit methyltransferase A.